The following is an 886-amino-acid chain: Isoleucine--tRNA ligase (886 aa).

A 'HIGH' region motif is present at residues 60 to 70 (PYANGDIHIGH). Glu546 lines the L-isoleucyl-5'-AMP pocket. The short motif at 587–591 (KMSKS) is the 'KMSKS' region element. Residue Lys590 participates in ATP binding. 4 residues coordinate Zn(2+): Cys856, Cys859, Cys870, and Cys873.

Belongs to the class-I aminoacyl-tRNA synthetase family. IleS type 1 subfamily. In terms of assembly, monomer. Zn(2+) serves as cofactor.

It localises to the cytoplasm. It carries out the reaction tRNA(Ile) + L-isoleucine + ATP = L-isoleucyl-tRNA(Ile) + AMP + diphosphate. Functionally, catalyzes the attachment of isoleucine to tRNA(Ile). As IleRS can inadvertently accommodate and process structurally similar amino acids such as valine, to avoid such errors it has two additional distinct tRNA(Ile)-dependent editing activities. One activity is designated as 'pretransfer' editing and involves the hydrolysis of activated Val-AMP. The other activity is designated 'posttransfer' editing and involves deacylation of mischarged Val-tRNA(Ile). The sequence is that of Isoleucine--tRNA ligase from Mesomycoplasma hyopneumoniae (strain 7448) (Mycoplasma hyopneumoniae).